Consider the following 542-residue polypeptide: TOM1-like protein 7 (542 aa).

Residues 29–158 (ATSELLRTPD…ELKRCGVKFP (130 aa)) form the VHS domain. Serine 161 is subject to Phosphoserine. In terms of domain architecture, GAT spans 201–289 (EIESLSLSSL…VLARHDAIAS (89 aa)). The segment at 303-340 (RETSSSLKTCGAAALESADSESSSSSSSSESETDEVED) is disordered. Residues 314 to 332 (AAALESADSESSSSSSSSE) are compositionally biased toward low complexity. A Phosphoserine modification is found at serine 521. Residues 522 to 542 (FPARATGTSGAATAATVDRQP) form a disordered region. Residues 524–542 (ARATGTSGAATAATVDRQP) show a composition bias toward low complexity.

This sequence belongs to the TOM1 family. Preferentially expressed in flowers.

Its subcellular location is the membrane. Might contribute to the loading of the ESCRT machinery. In Arabidopsis thaliana (Mouse-ear cress), this protein is TOM1-like protein 7.